A 934-amino-acid polypeptide reads, in one-letter code: LPS-assembly protein LptD (934 aa).

A signal peptide spans 1–33 (MALKSPAFRRKFPLLVTGGLLALQPFATSYVVA). The segment at 52–86 (KSPVNNLPPRPVHDGAALTSGTEAPSAEAESADKP) is disordered.

It belongs to the LptD family. Component of the lipopolysaccharide transport and assembly complex. Interacts with LptE and LptA.

The protein resides in the cell outer membrane. In terms of biological role, together with LptE, is involved in the assembly of lipopolysaccharide (LPS) at the surface of the outer membrane. The protein is LPS-assembly protein LptD of Pseudomonas putida (strain W619).